Consider the following 364-residue polypeptide: Peptide chain release factor 2 (364 aa).

Glutamine 252 bears the N5-methylglutamine mark.

It belongs to the prokaryotic/mitochondrial release factor family. Methylated by PrmC. Methylation increases the termination efficiency of RF2.

It is found in the cytoplasm. Peptide chain release factor 2 directs the termination of translation in response to the peptide chain termination codons UGA and UAA. In Clostridium perfringens (strain SM101 / Type A), this protein is Peptide chain release factor 2.